A 1042-amino-acid chain; its full sequence is Starch synthase 3, chloroplastic/amyloplastic (1042 aa).

The transit peptide at 1 to 44 directs the protein to the chloroplast; it reads MISYFLNQDFSRKKQGRMAASGPKSSGPRGFGRRTTVGSAQKRT. Residues 1–63 are disordered; that stretch reads MISYFLNQDF…NATSTATNEV (63 aa). The span at 54 to 63 shows a compositional bias: polar residues; it reads NATSTATNEV. A coiled-coil region spans residues 247–302; that stretch reads ENFLLEEKLREQEKLAKEEAERERQKEEKRRIEAQKAAIEADRAQAKAETQKRREL. Lys-608 contributes to the ADP-alpha-D-glucose binding site.

This sequence belongs to the glycosyltransferase 1 family. Bacterial/plant glycogen synthase subfamily. In terms of tissue distribution, expressed in leaves and flowers.

It localises to the plastid. Its subcellular location is the chloroplast. The protein localises to the amyloplast. The catalysed reaction is [(1-&gt;4)-alpha-D-glucosyl](n) + ADP-alpha-D-glucose = [(1-&gt;4)-alpha-D-glucosyl](n+1) + ADP + H(+). The protein operates within glycan biosynthesis; starch biosynthesis. Its function is as follows. Involved in the synthesis of glycan chains within amylopectin in leaves. May play a regulatory role in the control of starch accumulation in plastids. The sequence is that of Starch synthase 3, chloroplastic/amyloplastic (SS3) from Arabidopsis thaliana (Mouse-ear cress).